The sequence spans 505 residues: MNVQVLDRYEIVKSLGSGGFGDTFLAKDTQIPSQKLVVIKRLKPANANSNTSTELIQKLFEKEASVLEDLGEHNSQIPKLYSYFSNDNEFYLVQEYIQGVSLNEIAPISSEQAKTILSSLLTTLKYIHSKGIIHRDIKPENIILRDSDHLPVLIDFGAVKETMGAVTLGSGSTVSSVVIGTRGFMAPEQSSGRSVFSTDLYALGLTIIYTLTKKLPVEFSSDQQTGQLDWQSHVSKIDSVLAKVINKAIEMEPSRRYSSAEAMYQALHSLISSGAEPALPMETVRVAPSNEFLVTRSSTKTAETVVKPVGNSHNNYSNNNGKSKIATLLTVLIGIIVVTAGLGGGFIITQQIKEAEARAAQAEKEKQEAEQKRIEAEQKIAENEKRQRELEQKRVEEERQRLAAEAERAKQERQRLAAERQRVQVLANQAKAMASGASATIGGIPGSKNIRSGPGTDYGVITQGYTGEGLDILDSSTDSSGHVWYKVYHYGSGSTGWIASQLVNF.

Residues 9–271 (YEIVKSLGSG…AMYQALHSLI (263 aa)) enclose the Protein kinase domain. ATP-binding positions include 15–23 (LGSGGFGDT) and K40. D136 (proton acceptor) is an active-site residue. The SH3b domain maps to 436 to 505 (GASATIGGIP…GWIASQLVNF (70 aa)).

Belongs to the protein kinase superfamily. Ser/Thr protein kinase family.

The catalysed reaction is L-seryl-[protein] + ATP = O-phospho-L-seryl-[protein] + ADP + H(+). It carries out the reaction L-threonyl-[protein] + ATP = O-phospho-L-threonyl-[protein] + ADP + H(+). In Synechocystis sp. (strain ATCC 27184 / PCC 6803 / Kazusa), this protein is Serine/threonine-protein kinase D (spkD).